The sequence spans 180 residues: Crossover junction endodeoxyribonuclease RuvC (180 aa).

Catalysis depends on residues Asp7, Glu66, and Asp138. 3 residues coordinate Mg(2+): Asp7, Glu66, and Asp138.

Belongs to the RuvC family. Homodimer which binds Holliday junction (HJ) DNA. The HJ becomes 2-fold symmetrical on binding to RuvC with unstacked arms; it has a different conformation from HJ DNA in complex with RuvA. In the full resolvosome a probable DNA-RuvA(4)-RuvB(12)-RuvC(2) complex forms which resolves the HJ. Mg(2+) is required as a cofactor.

It localises to the cytoplasm. It catalyses the reaction Endonucleolytic cleavage at a junction such as a reciprocal single-stranded crossover between two homologous DNA duplexes (Holliday junction).. In terms of biological role, the RuvA-RuvB-RuvC complex processes Holliday junction (HJ) DNA during genetic recombination and DNA repair. Endonuclease that resolves HJ intermediates. Cleaves cruciform DNA by making single-stranded nicks across the HJ at symmetrical positions within the homologous arms, yielding a 5'-phosphate and a 3'-hydroxyl group; requires a central core of homology in the junction. The consensus cleavage sequence is 5'-(A/T)TT(C/G)-3'. Cleavage occurs on the 3'-side of the TT dinucleotide at the point of strand exchange. HJ branch migration catalyzed by RuvA-RuvB allows RuvC to scan DNA until it finds its consensus sequence, where it cleaves and resolves the cruciform DNA. The chain is Crossover junction endodeoxyribonuclease RuvC from Burkholderia pseudomallei (strain 668).